The chain runs to 126 residues: Large ribosomal subunit protein bL12 (126 aa).

This sequence belongs to the bacterial ribosomal protein bL12 family. In terms of assembly, homodimer. Part of the ribosomal stalk of the 50S ribosomal subunit. Forms a multimeric L10(L12)X complex, where L10 forms an elongated spine to which 2 to 4 L12 dimers bind in a sequential fashion. Binds GTP-bound translation factors.

Forms part of the ribosomal stalk which helps the ribosome interact with GTP-bound translation factors. Is thus essential for accurate translation. This chain is Large ribosomal subunit protein bL12, found in Methylobacterium sp. (strain 4-46).